A 148-amino-acid chain; its full sequence is NADPH-dependent 7-cyano-7-deazaguanine reductase (148 aa).

The Thioimide intermediate role is filled by Cys-50. Asp-57 acts as the Proton donor in catalysis. Residues Val-72–Ser-74 and His-91–Glu-92 contribute to the substrate site.

Belongs to the GTP cyclohydrolase I family. QueF type 1 subfamily.

Its subcellular location is the cytoplasm. It catalyses the reaction 7-aminomethyl-7-carbaguanine + 2 NADP(+) = 7-cyano-7-deazaguanine + 2 NADPH + 3 H(+). It participates in tRNA modification; tRNA-queuosine biosynthesis. In terms of biological role, catalyzes the NADPH-dependent reduction of 7-cyano-7-deazaguanine (preQ0) to 7-aminomethyl-7-deazaguanine (preQ1). This Helicobacter pylori (strain HPAG1) protein is NADPH-dependent 7-cyano-7-deazaguanine reductase.